The primary structure comprises 348 residues: Phenylalanine--tRNA ligase alpha subunit (348 aa).

Glu-259 lines the Mg(2+) pocket.

This sequence belongs to the class-II aminoacyl-tRNA synthetase family. Phe-tRNA synthetase alpha subunit type 1 subfamily. Tetramer of two alpha and two beta subunits. Requires Mg(2+) as cofactor.

It is found in the cytoplasm. The enzyme catalyses tRNA(Phe) + L-phenylalanine + ATP = L-phenylalanyl-tRNA(Phe) + AMP + diphosphate + H(+). This is Phenylalanine--tRNA ligase alpha subunit from Lacticaseibacillus casei (strain BL23) (Lactobacillus casei).